Consider the following 794-residue polypeptide: Zinc finger and BTB domain-containing protein 17 (794 aa).

The region spanning 1-104 (MDFPQHSQRV…VASFLQMQDI (104 aa)) is the BTB domain. A disordered region spans residues 116–285 (EPSSTTGESA…QNLRSGTYGD (170 aa)). Basic and acidic residues predominate over residues 132-142 (GGDKRAKDEKA). Over residues 203–216 (SSMAAAEAEALSES) the composition is skewed to low complexity. A compositionally biased stretch (basic and acidic residues) spans 243–252 (VKEEGMHLDN). Over residues 254-263 (EPPEENEESA) the composition is skewed to acidic residues. Residues 260–299 (EESAGTDSGQELGMEGQNLRSGTYGDRTESKAYGSIIHKC) form an interaction with MYC region. C2H2-type zinc fingers lie at residues 297–319 (HKCEDCGKEFTHTGNFKRHIRIH), 325–347 (FSCRECSKAFSDPAACKAHEKTH), 353–375 (YGCEECGKSYRLISLLNLHKKRH), 381–403 (YRCGDCGKLFTTSGNLKRHQLVH), 409–431 (YQCDYCGRSFSDPTSKMRHLETH), 437–459 (HKCPHCDKKFNQVGNLKAHLKIH), 465–487 (LKCRECGKQFTTSGNLKRHLRIH), 493–515 (YVCTHCQRQFADPGALQRHVRIH), 519–543 (KPCQCVICGKAFTQASSLIAHVRQH), 549–571 (YVCERCGKRFVQSSQLANHIRHH), 577–599 (HKCSVCSKAFVNVGDLSKHIIIH), 605–628 (YLCDKCGRGFNRVDNLRSHVKTVH), and 708–730 (YACDSCGDKFLDANSLAQHVRIH). A Glycyl lysine isopeptide (Lys-Gly) (interchain with G-Cter in ubiquitin) cross-link involves residue Lys-388. Residue Lys-472 forms a Glycyl lysine isopeptide (Lys-Gly) (interchain with G-Cter in ubiquitin) linkage. The segment at 628–709 (HQGKAGIKIL…EDPNTHILYA (82 aa)) is interaction with MYC. Positions 628-794 (HQGKAGIKIL…TAPDCLPPAE (167 aa)) are interaction with HCFC1. Residues 769-794 (PRDGTEGQPTLAESPPTAPDCLPPAE) form a disordered region. Pro residues predominate over residues 784–794 (PTAPDCLPPAE).

Belongs to the krueppel C2H2-type zinc-finger protein family. In terms of assembly, homooligomerizes (via the BTB/POZ domain), multimerization is required for DNA binding. Binds to the C-terminal helix-loop-helix motif of MYC which inhibits ZBTB17 transactivation and growth arrest activities and renders it insoluble in the nucleus. Also interacts with HCFC1, MAGEA4 and TMPRSS11A. Interacts (via the C-terminal zinc fingers) with GFI1; the interaction results in the recruitment of MYC to the CDKN1A/p21 and CDKN1B promoters and repression of transcription. Interacts with TRAF2, interfering with the binding of UBC13 to TRAF2, and inhibiting TRAF2 E3 ligase activity. Interacts with BCL6; the interaction inhibits ZBTB17 transactivation activity on target genes involved in cell cycle arrest. Interacts with ZBTB49; this interaction blocks ZBTB17-mediated repression of RB1. Undergoes 'Lys-48'-linked polyubiquitination at Lys-388 and Lys-472 and subsequent proteasomal degradation in a TRAF2-dependent manner and upon TNFA stimulation. Found in all the embryonic and adult tissues examined.

The protein localises to the nucleus. In terms of biological role, transcription factor that can function as an activator or repressor depending on its binding partners, and by targeting negative regulators of cell cycle progression. Has been shown to bind to the promoters of adenovirus major late protein and cyclin D1 and activate transcription. Required for early embryonic development during gastrulation. Plays a critical role in early lymphocyte development, where it is essential to prevent apoptosis in lymphoid precursors, allowing them to survive in response to IL7 and undergo proper lineage commitment. Represses RB1 transcription; this repression can be blocked by interaction with ZBTB49. In Mus musculus (Mouse), this protein is Zinc finger and BTB domain-containing protein 17 (Zbtb17).